The chain runs to 514 residues: 2-isopropylmalate synthase (514 aa).

A Pyruvate carboxyltransferase domain is found at 8–270; it reads IRIFDTTLRD…DCGVVTEQLF (263 aa). Mn(2+) contacts are provided by Asp-17, His-205, His-207, and Asn-241. The regulatory domain stretch occupies residues 394–514; that stretch reads RLVNLSVQCS…KEEEQEKEGI (121 aa).

The protein belongs to the alpha-IPM synthase/homocitrate synthase family. LeuA type 1 subfamily. Homodimer. It depends on Mn(2+) as a cofactor.

Its subcellular location is the cytoplasm. It catalyses the reaction 3-methyl-2-oxobutanoate + acetyl-CoA + H2O = (2S)-2-isopropylmalate + CoA + H(+). It functions in the pathway amino-acid biosynthesis; L-leucine biosynthesis; L-leucine from 3-methyl-2-oxobutanoate: step 1/4. In terms of biological role, catalyzes the condensation of the acetyl group of acetyl-CoA with 3-methyl-2-oxobutanoate (2-ketoisovalerate) to form 3-carboxy-3-hydroxy-4-methylpentanoate (2-isopropylmalate). This chain is 2-isopropylmalate synthase, found in Nitratidesulfovibrio vulgaris (strain DSM 19637 / Miyazaki F) (Desulfovibrio vulgaris).